The sequence spans 159 residues: Ribosomal RNA large subunit methyltransferase H (159 aa).

Residues leucine 76 and glycine 108 each contribute to the S-adenosyl-L-methionine site.

Belongs to the RNA methyltransferase RlmH family. In terms of assembly, homodimer.

It localises to the cytoplasm. It catalyses the reaction pseudouridine(1915) in 23S rRNA + S-adenosyl-L-methionine = N(3)-methylpseudouridine(1915) in 23S rRNA + S-adenosyl-L-homocysteine + H(+). In terms of biological role, specifically methylates the pseudouridine at position 1915 (m3Psi1915) in 23S rRNA. This is Ribosomal RNA large subunit methyltransferase H from Levilactobacillus brevis (strain ATCC 367 / BCRC 12310 / CIP 105137 / JCM 1170 / LMG 11437 / NCIMB 947 / NCTC 947) (Lactobacillus brevis).